Here is a 515-residue protein sequence, read N- to C-terminus: RNA-binding region-containing protein 3 (515 aa).

The interval 1-26 (MAVPEPSMPLSRGGPGSASLSPPRGD) is disordered. Serine 21 bears the Phosphoserine mark. Positions 27–102 (RTLLVRHLPA…HTLVVEFAKE (76 aa)) constitute an RRM 1 domain. 3 disordered regions span residues 107–133 (HSSC…EKKE), 215–254 (LHAP…EEDR), and 337–369 (ETEQ…PKPN). Serine 108 is subject to Phosphoserine. Residues 115-133 (AEKKKRLDDTVENDKEKKE) show a composition bias toward basic and acidic residues. Positions 218 to 230 (PLPPTSPQPPEEP) are enriched in pro residues. A compositionally biased stretch (basic and acidic residues) spans 337–348 (ETEQNNEEKNSD). Serine 349 carries the phosphoserine modification. The 84-residue stretch at 419 to 502 (CRIYVKNLAR…KPMVVQFARS (84 aa)) folds into the RRM 2 domain.

Component of the U11/U12 snRNPs that are part of the U12-type spliceosome. Found in a complex with m(7)G-capped U12 snRNA. Interacts with PDCD7.

It localises to the nucleus. In terms of biological role, participates in pre-mRNA U12-dependent splicing, performed by the minor spliceosome which removes U12-type introns. U12-type introns comprises less than 1% of all non-coding sequences. Binds to the 3'-stem-loop of m(7)G-capped U12 snRNA. This Rattus norvegicus (Rat) protein is RNA-binding region-containing protein 3 (Rnpc3).